Reading from the N-terminus, the 95-residue chain is Ferredoxin-like protein FixX (95 aa).

Belongs to the bacterial-type ferredoxin family. FixX subfamily.

Functionally, could be part of an electron transfer system required for anaerobic carnitine reduction. Could be a 3Fe-4S cluster-containing protein. The protein is Ferredoxin-like protein FixX (fixX) of Salmonella typhimurium (strain LT2 / SGSC1412 / ATCC 700720).